Here is a 455-residue protein sequence, read N- to C-terminus: Acid sphingomyelinase-like phosphodiesterase 3b (455 aa).

The first 18 residues, 1–18 (MRLLAWLIFLANWGGARA), serve as a signal peptide directing secretion. Residues Asp-28 and His-30 each contribute to the Zn(2+) site. Cys-45 and Cys-64 are disulfide-bonded. Asn-72 carries an N-linked (GlcNAc...) asparagine glycan. Residues Asp-93 and Asn-134 each coordinate Zn(2+). Asn-164 is a glycosylation site (N-linked (GlcNAc...) asparagine). Zn(2+)-binding residues include His-236, His-277, and His-279. The N-linked (GlcNAc...) asparagine glycan is linked to Asn-343. Cystine bridges form between Cys-405-Cys-409 and Cys-415-Cys-428.

Belongs to the acid sphingomyelinase family. Interacts with TLR4, TLR7, TLR8 and TLR9. It depends on Zn(2+) as a cofactor. In terms of processing, N-glycosylated.

It is found in the secreted. The protein resides in the cell membrane. Lipid-modulating phosphodiesterase. Active on the surface of macrophages and dendritic cells and strongly influences macrophage lipid composition and membrane fluidity. Acts as a negative regulator of Toll-like receptor signaling. Has in vitro phosphodiesterase activity, but the physiological substrate is unknown. Lacks activity with phosphocholine-containing lipids, but can cleave CDP-choline, and can release phosphate from ATP and ADP (in vitro). This is Acid sphingomyelinase-like phosphodiesterase 3b (SMPDL3B) from Homo sapiens (Human).